Here is a 138-residue protein sequence, read N- to C-terminus: Large ribosomal subunit protein uL16 (138 aa).

Over residues 1-16 (MLIPKRVKFRRQHRPN) the composition is skewed to basic residues. Residues 1 to 25 (MLIPKRVKFRRQHRPNRSGMSKGGN) are disordered.

Belongs to the universal ribosomal protein uL16 family. In terms of assembly, part of the 50S ribosomal subunit.

Its function is as follows. Binds 23S rRNA and is also seen to make contacts with the A and possibly P site tRNAs. The sequence is that of Large ribosomal subunit protein uL16 from Corynebacterium urealyticum (strain ATCC 43042 / DSM 7109).